The following is a 211-amino-acid chain: N-(5'-phosphoribosyl)anthranilate isomerase (211 aa).

Belongs to the TrpF family.

It catalyses the reaction N-(5-phospho-beta-D-ribosyl)anthranilate = 1-(2-carboxyphenylamino)-1-deoxy-D-ribulose 5-phosphate. It functions in the pathway amino-acid biosynthesis; L-tryptophan biosynthesis; L-tryptophan from chorismate: step 3/5. The protein is N-(5'-phosphoribosyl)anthranilate isomerase of Desulfovibrio desulfuricans (strain ATCC 27774 / DSM 6949 / MB).